Here is a 360-residue protein sequence, read N- to C-terminus: MKSILVGAAVALVVSILFTPYLIRVFSRQGFGQEIREEVQQSHAAKRGTPTMGGVAILVAMWAGYLVAHLTVTDEPPTASGLLVLGLTTALGIVGFLDDFIKIRKQRNLGLNKTAKLVGQLVASVLFAVLAMQFANQNGITPASEHLSFIRDITVISFGSVGFVIFAYIAISGWSNAVNFTDGMDGLAGGTAAMVLAIYVVISFWQFRNNCSAPNGPALACYTVRDPLDIALVAGAAMAACVGFLWWNAAPAKIFMGDTGSLALGGLLAGLSMVTRTELLMIIIGGLFVVEALSVVMQIVVFRSTRRRLFRMAPFHHHFELAGWAETTVIIRFWVLAAISAMFGLGLFYADWLSLAREFF.

Helical transmembrane passes span 3–23, 52–72, 81–101, 115–135, 153–173, 187–207, 230–250, 254–274, 282–302, and 333–353; these read SILVGAAVALVVSILFTPYLI, MGGVAILVAMWAGYLVAHLTV, GLLVLGLTTALGIVGFLDDFI, AKLVGQLVASVLFAVLAMQFA, ITVISFGSVGFVIFAYIAISG, LAGGTAAMVLAIYVVISFWQF, IALVAGAAMAACVGFLWWNAA, IFMGDTGSLALGGLLAGLSMV, IIIGGLFVVEALSVVMQIVVF, and FWVLAAISAMFGLGLFYADWL.

It belongs to the glycosyltransferase 4 family. MraY subfamily. Mg(2+) is required as a cofactor.

It is found in the cell membrane. It carries out the reaction UDP-N-acetyl-alpha-D-muramoyl-L-alanyl-gamma-D-glutamyl-meso-2,6-diaminopimeloyl-D-alanyl-D-alanine + di-trans,octa-cis-undecaprenyl phosphate = di-trans,octa-cis-undecaprenyl diphospho-N-acetyl-alpha-D-muramoyl-L-alanyl-D-glutamyl-meso-2,6-diaminopimeloyl-D-alanyl-D-alanine + UMP. It participates in cell wall biogenesis; peptidoglycan biosynthesis. Functionally, catalyzes the initial step of the lipid cycle reactions in the biosynthesis of the cell wall peptidoglycan: transfers peptidoglycan precursor phospho-MurNAc-pentapeptide from UDP-MurNAc-pentapeptide onto the lipid carrier undecaprenyl phosphate, yielding undecaprenyl-pyrophosphoryl-MurNAc-pentapeptide, known as lipid I. The sequence is that of Phospho-N-acetylmuramoyl-pentapeptide-transferase from Saccharopolyspora erythraea (strain ATCC 11635 / DSM 40517 / JCM 4748 / NBRC 13426 / NCIMB 8594 / NRRL 2338).